Here is a 219-residue protein sequence, read N- to C-terminus: Intraflagellar transport protein 22 (219 aa).

Residues 12-19 (GPSKSGKS) and 72-79 (WDVGGSSK) each bind GTP.

The protein belongs to the small GTPase superfamily. Rab family.

It is found in the cytoplasm. The protein resides in the cytoskeleton. Its subcellular location is the flagellum basal body. It localises to the cell projection. The protein localises to the cilium. It is found in the flagellum. Its function is as follows. Required for flagellum formation. The protein is Intraflagellar transport protein 22 (IFT22) of Trypanosoma brucei brucei (strain 927/4 GUTat10.1).